We begin with the raw amino-acid sequence, 168 residues long: MSDPQGDAPQLTHFVGGQPRMVDVSAKAPTTRTARAEAWVLLPPESRAALLAGQTPKGDPLSVARLAGLAGSKRTADLIFLCHPIPVTSAEVDVTLKDAGIHITALVKTTAPTGVEMEALTAVTVAALNVYDMLKATSKAIEVSGVRLLSKTGGKSGDYQAAERPPQP.

Substrate contacts are provided by residues Leu81–His83 and Met117–Glu118. Asp132 is an active-site residue.

This sequence belongs to the MoaC family. In terms of assembly, homohexamer; trimer of dimers.

It carries out the reaction (8S)-3',8-cyclo-7,8-dihydroguanosine 5'-triphosphate = cyclic pyranopterin phosphate + diphosphate. The protein operates within cofactor biosynthesis; molybdopterin biosynthesis. Catalyzes the conversion of (8S)-3',8-cyclo-7,8-dihydroguanosine 5'-triphosphate to cyclic pyranopterin monophosphate (cPMP). This is Cyclic pyranopterin monophosphate synthase from Deinococcus radiodurans (strain ATCC 13939 / DSM 20539 / JCM 16871 / CCUG 27074 / LMG 4051 / NBRC 15346 / NCIMB 9279 / VKM B-1422 / R1).